The following is a 423-amino-acid chain: Phosphoribosylamine--glycine ligase (423 aa).

The ATP-grasp domain occupies 107-312 (KDLCARYGIP…LLPLLYAAAT (206 aa)). An ATP-binding site is contributed by 133–193 (IREEGAPIVI…EAYLDGEEAS (61 aa)). Residues Glu282 and Asn284 each contribute to the Mg(2+) site.

The protein belongs to the GARS family. Requires Mg(2+) as cofactor. Mn(2+) serves as cofactor.

The enzyme catalyses 5-phospho-beta-D-ribosylamine + glycine + ATP = N(1)-(5-phospho-beta-D-ribosyl)glycinamide + ADP + phosphate + H(+). It participates in purine metabolism; IMP biosynthesis via de novo pathway; N(1)-(5-phospho-D-ribosyl)glycinamide from 5-phospho-alpha-D-ribose 1-diphosphate: step 2/2. The sequence is that of Phosphoribosylamine--glycine ligase from Rhizobium meliloti (strain 1021) (Ensifer meliloti).